The chain runs to 433 residues: Cyclin-dependent kinase 15 (433 aa).

The interval 46–83 (ASSSTASFHPRGLEAASAQKLKSKRPRSNSDSFQEENL) is disordered. Residues 52–336 (SFHPRGLEAA…SKLPNYNPEW (285 aa)) form the Protein kinase domain. Residues 58–66 (LEAASAQKL) and E81 contribute to the ATP site. T173 serves as the catalytic Proton acceptor.

It belongs to the protein kinase superfamily. CMGC Ser/Thr protein kinase family. CDC2/CDKX subfamily. Mg(2+) serves as cofactor.

It catalyses the reaction L-seryl-[protein] + ATP = O-phospho-L-seryl-[protein] + ADP + H(+). The catalysed reaction is L-threonyl-[protein] + ATP = O-phospho-L-threonyl-[protein] + ADP + H(+). Its function is as follows. Serine/threonine-protein kinase that acts like an antiapoptotic protein that counters TRAIL/TNFSF10-induced apoptosis by inducing phosphorylation of BIRC5 at 'Thr-34'. In Mus musculus (Mouse), this protein is Cyclin-dependent kinase 15 (Cdk15).